A 146-amino-acid chain; its full sequence is Small ribosomal subunit protein uS9z (146 aa).

It belongs to the universal ribosomal protein uS9 family.

This Arabidopsis thaliana (Mouse-ear cress) protein is Small ribosomal subunit protein uS9z (RPS16A).